A 416-amino-acid chain; its full sequence is MSTPLQGIKVLDFTGVQSGPSCTQMLAWFGADVIKIERPGVGDVTRHQLRDIPDIDALYFTMLNSNKRSIELNTKTAEGKEVMEKLIREADILVENFHPGAIDHMGFTWEHIQEINPRLIFGSIKGFDECSPYVNVKAYENVAQAAGGAASTTGFWDGPPLVSAAALGDSNTGMHLLIGLLAALLHREKTGRGQRVTMSMQDAVLNLCRVKLRDQQRLDKLGYLEEYPQYPNGTFGDAVPRGGNAGGGGQPGWILKCKGWETDPNAYIYFTIQEQNWENTCKAIGKPEWITDPAYSTAHARQPHIFDIFAEIEKYTVTIDKHEAVAYLTQFDIPCAPVLSMKEISLDPSLRQSGSVVEVEQPLRGKYLTVGCPMKFSAFTPDIKAAPLLGEHTAVVLQELGYSDDEIAAMKQNHAI.

CoA-binding positions include 17–18 (QS), Arg38, 72–75 (LNTK), 96–98 (NFH), His104, and 137–140 (KAYE). Residue Asp169 is the Nucleophile of the active site. 248–250 (GGQ) lines the substrate pocket. Residue 273–275 (QEQ) coordinates CoA.

It belongs to the CoA-transferase III family. Frc subfamily. Homodimer.

It catalyses the reaction formyl-CoA + oxalate = oxalyl-CoA + formate. It functions in the pathway metabolic intermediate degradation; oxalate degradation; CO(2) and formate from oxalate: step 1/2. Functionally, involved in the catabolism of oxalate and in the adapatation to low pH via the induction of the oxalate-dependent acid tolerance response (ATR). Catalyzes the transfer of the CoA moiety from formyl-CoA to oxalate. The sequence is that of Formyl-CoA:oxalate CoA-transferase from Shigella boydii serotype 18 (strain CDC 3083-94 / BS512).